A 189-amino-acid polypeptide reads, in one-letter code: MPIDFLQPADIVAPQLLGCTLTHGGVGIRITEVEAYLDSTDEAAHTYRGKTPRNAAMFGPGGHMYVYISYGIHRAGNIVCGPEGTGQGVLLRAGEVVSGESIAQSRRGEGIPHARLAQGPGNFGQALGLEISDNHASVFGPSFLISDRVETPEIVRGPRIGISKNTEALLRFWIPNDPTVSGRRGYPKE.

The protein belongs to the DNA glycosylase MPG family.

The protein is Putative 3-methyladenine DNA glycosylase (mag) of Corynebacterium glutamicum (strain ATCC 13032 / DSM 20300 / JCM 1318 / BCRC 11384 / CCUG 27702 / LMG 3730 / NBRC 12168 / NCIMB 10025 / NRRL B-2784 / 534).